A 362-amino-acid polypeptide reads, in one-letter code: MNPSLIRKLEGLIERHEEVQAMLGEPGVASDQDRYRALTREYAQLEDIVHAFQRFRQAEENLEATKLMLEEDDADLREMAQEELPLAKSTLEEQEQALQVMLLPRDPKDDNNCYLEIRAGAGGDEAAIFAGDLFRMYSRYAERQGWRISIVSCNDGEHGGYKEVIAKVDGEHVYGRLKFESGGHRVQRVPETESQGRVHTSACTVAVLPEVPEAEQIEINANDLKIDTFRASGAGGQHVNKTDSAIRITHLPTGLVVECQDERSQHKNRAKAMSVLSARLQAAEDERHRAAEQSTRRNLVGSGDRSERIRTYNYPQGRLSEHRINLTLYRLGEIMEGDLDCIISPMIQEYQADQLASLAENS.

Residue Q237 is modified to N5-methylglutamine.

Belongs to the prokaryotic/mitochondrial release factor family. In terms of processing, methylated by PrmC. Methylation increases the termination efficiency of RF1.

The protein resides in the cytoplasm. Functionally, peptide chain release factor 1 directs the termination of translation in response to the peptide chain termination codons UAG and UAA. The chain is Peptide chain release factor 1 from Aeromonas salmonicida (strain A449).